The sequence spans 609 residues: Ovochymase-2 (609 aa).

The first 22 residues, 1–22 (MPISKDKLILILGMVCLEQGHS), serve as a signal peptide directing secretion. The propeptide at 23–51 (ETLSSIRNPDCGQSLVKPQPQNYFSLFSR) is activation peptide. In terms of domain architecture, Peptidase S1 spans 52–299 (IVGGSQVEKG…VLPWILKHIQ (248 aa)). Cysteines 77 and 93 form a disulfide. H92 (charge relay system) is an active-site residue. N104 carries N-linked (GlcNAc...) asparagine glycosylation. A Ca(2+)-binding site is contributed by E119. The Charge relay system role is filled by D142. Cystine bridges form between C176-C246, C207-C225, C236-C265, and C311-C341. Residue S240 is the Charge relay system of the active site. CUB domains follow at residues 311–421 (CSEP…YKAL) and 431–543 (CRSL…ISFI). The N-linked (GlcNAc...) asparagine glycan is linked to N356. Residues C365 and C384 are joined by a disulfide bond. A glycan (N-linked (GlcNAc...) asparagine) is linked at N415. Disulfide bonds link C431–C458 and C485–C506. N-linked (GlcNAc...) asparagine glycosylation is found at N530 and N549. Residues 580 to 609 (HTKPPYEEDIGEMPAIDSGLLKQGERRGKH) are disordered.

The protein belongs to the peptidase S1 family. Only expressed in uterus tissue. Expressed in the initial segment (IS) of the caput epididymis, the region most proximal to the testis.

Its subcellular location is the secreted. Functionally, may be required for sperm ADAM3 processing and consequential sperm fertilizing ability. In vitro, has an endopeptidase activity. This Mus musculus (Mouse) protein is Ovochymase-2.